Consider the following 263-residue polypeptide: Indolethylamine N-methyltransferase (263 aa).

The residue at position 13 (K13) is an N6-succinyllysine. S-adenosyl-L-methionine is bound by residues Y20, Y25, G63, Y69, 85 to 87, and N90; that span reads DFT. K96 bears the N6-succinyllysine mark. S-adenosyl-L-methionine-binding positions include 142–143 and L163; that span reads DV.

This sequence belongs to the class I-like SAM-binding methyltransferase superfamily. NNMT/PNMT/TEMT family. As to quaternary structure, monomer. In terms of tissue distribution, widely expressed. The highest levels were in thyroid, adrenal gland, adult and fetal lung. Intermediate levels in heart, placenta, skeletal muscle, testis, small intestine, pancreas, stomach, spinal cord, lymph node and trachea. Very low levels in adult and fetal kidney and liver, in adult spleen, thymus, ovary, colon and bone marrow. Not expressed in peripheral blood leukocytes and brain.

It is found in the cytoplasm. It catalyses the reaction a tertiary amine + S-adenosyl-L-methionine = a methylated tertiary amine + S-adenosyl-L-homocysteine + H(+). It carries out the reaction a secondary amine + S-adenosyl-L-methionine = a methylated secondary amine + S-adenosyl-L-homocysteine + H(+). The enzyme catalyses a primary amine + S-adenosyl-L-methionine = a methylated primary amine + S-adenosyl-L-homocysteine + H(+). The catalysed reaction is dimethyl sulfide + S-adenosyl-L-methionine = trimethylsulfonium + S-adenosyl-L-homocysteine. In terms of biological role, functions as a thioether S-methyltransferase and is active with a variety of thioethers and the corresponding selenium and tellurium compounds, including 3-methylthiopropionaldehyde, dimethyl selenide, dimethyl telluride, 2-methylthioethylamine, 2-methylthioethanol, methyl-n-propyl sulfide and diethyl sulfide. Plays an important role in the detoxification of selenium compounds. Catalyzes the N-methylation of tryptamine and structurally related compounds. This is Indolethylamine N-methyltransferase (INMT) from Homo sapiens (Human).